Reading from the N-terminus, the 125-residue chain is NADPH-dependent 7-cyano-7-deazaguanine reductase (125 aa).

C40 functions as the Thioimide intermediate in the catalytic mechanism. Catalysis depends on D47, which acts as the Proton donor. Substrate contacts are provided by residues 62–64 (LET) and 81–82 (HE).

This sequence belongs to the GTP cyclohydrolase I family. QueF type 1 subfamily.

It is found in the cytoplasm. It carries out the reaction 7-aminomethyl-7-carbaguanine + 2 NADP(+) = 7-cyano-7-deazaguanine + 2 NADPH + 3 H(+). The protein operates within tRNA modification; tRNA-queuosine biosynthesis. Its function is as follows. Catalyzes the NADPH-dependent reduction of 7-cyano-7-deazaguanine (preQ0) to 7-aminomethyl-7-deazaguanine (preQ1). This chain is NADPH-dependent 7-cyano-7-deazaguanine reductase, found in Frankia casuarinae (strain DSM 45818 / CECT 9043 / HFP020203 / CcI3).